A 374-amino-acid polypeptide reads, in one-letter code: Serine/threonine-protein kinase-transforming protein mos (374 aa).

The 277-residue stretch at 94 to 370 (VCLMHRLGSG…LLQRDLKAFR (277 aa)) folds into the Protein kinase domain. ATP is bound by residues 100–108 (LGSGGFGSV) and K121. D229 acts as the Proton acceptor in catalysis.

It belongs to the protein kinase superfamily. Ser/Thr protein kinase family.

It carries out the reaction L-seryl-[protein] + ATP = O-phospho-L-seryl-[protein] + ADP + H(+). It catalyses the reaction L-threonyl-[protein] + ATP = O-phospho-L-threonyl-[protein] + ADP + H(+). This chain is Serine/threonine-protein kinase-transforming protein mos (V-MOS), found in Mus musculus (Mouse).